The chain runs to 1011 residues: Ankyrin repeat domain-containing protein 18B (1011 aa).

5 ANK repeats span residues 67–96 (KDRT…QINI), 100–129 (LNRT…NPNI), 133–162 (YGNT…NIEA), 166–195 (EGNT…NIHA), and 199–228 (FKRT…HISS). Disordered stretches follow at residues 264 to 330 (LRND…GKKK) and 533 to 554 (MHPN…SEER). Coiled-coil stretches lie at residues 277 to 319 (ENLK…ENKQ), 385 to 639 (NEEM…ELVD), 692 to 722 (ISLL…CLEM), and 752 to 908 (FKKL…EAFA). Basic residues predominate over residues 280–293 (KKRKKRKKLKKRKE). Positions 294–319 (GAKAEHNLKVASEEKQERLERSENKQ) are enriched in basic and acidic residues.

The polypeptide is Ankyrin repeat domain-containing protein 18B (ANKRD18B) (Homo sapiens (Human)).